A 493-amino-acid polypeptide reads, in one-letter code: Probable phospho-2-dehydro-3-deoxyheptonate aldolase, chloroplastic (493 aa).

A chloroplast-targeting transit peptide spans 1-58 (MAMSNTSALASKLLPSCKPHQPTLTFFSPSTTCQKKPRSSRPISAAVHVTQPPKTPIS).

The protein belongs to the class-II DAHP synthase family.

It is found in the plastid. The protein resides in the chloroplast. It carries out the reaction D-erythrose 4-phosphate + phosphoenolpyruvate + H2O = 7-phospho-2-dehydro-3-deoxy-D-arabino-heptonate + phosphate. Its pathway is metabolic intermediate biosynthesis; chorismate biosynthesis; chorismate from D-erythrose 4-phosphate and phosphoenolpyruvate: step 1/7. The sequence is that of Probable phospho-2-dehydro-3-deoxyheptonate aldolase, chloroplastic (DHS1) from Catharanthus roseus (Madagascar periwinkle).